Reading from the N-terminus, the 147-residue chain is Ribonuclease P protein component (147 aa).

The tract at residues 117–147 (TRPRGQSSHRTRASREATSAHTTAVGEQPTQ) is disordered.

This sequence belongs to the RnpA family. Consists of a catalytic RNA component (M1 or rnpB) and a protein subunit.

The enzyme catalyses Endonucleolytic cleavage of RNA, removing 5'-extranucleotides from tRNA precursor.. RNaseP catalyzes the removal of the 5'-leader sequence from pre-tRNA to produce the mature 5'-terminus. It can also cleave other RNA substrates such as 4.5S RNA. The protein component plays an auxiliary but essential role in vivo by binding to the 5'-leader sequence and broadening the substrate specificity of the ribozyme. This Thermobifida fusca (strain YX) protein is Ribonuclease P protein component.